A 283-amino-acid chain; its full sequence is Phosphatidylserine decarboxylase proenzyme (283 aa).

Active-site charge relay system; for autoendoproteolytic cleavage activity residues include aspartate 90, histidine 143, and serine 248. The active-site Schiff-base intermediate with substrate; via pyruvic acid; for decarboxylase activity is the serine 248. Serine 248 carries the post-translational modification Pyruvic acid (Ser); by autocatalysis.

Belongs to the phosphatidylserine decarboxylase family. PSD-B subfamily. Prokaryotic type I sub-subfamily. As to quaternary structure, heterodimer of a large membrane-associated beta subunit and a small pyruvoyl-containing alpha subunit. Pyruvate serves as cofactor. Post-translationally, is synthesized initially as an inactive proenzyme. Formation of the active enzyme involves a self-maturation process in which the active site pyruvoyl group is generated from an internal serine residue via an autocatalytic post-translational modification. Two non-identical subunits are generated from the proenzyme in this reaction, and the pyruvate is formed at the N-terminus of the alpha chain, which is derived from the carboxyl end of the proenzyme. The autoendoproteolytic cleavage occurs by a canonical serine protease mechanism, in which the side chain hydroxyl group of the serine supplies its oxygen atom to form the C-terminus of the beta chain, while the remainder of the serine residue undergoes an oxidative deamination to produce ammonia and the pyruvoyl prosthetic group on the alpha chain. During this reaction, the Ser that is part of the protease active site of the proenzyme becomes the pyruvoyl prosthetic group, which constitutes an essential element of the active site of the mature decarboxylase.

The protein resides in the cell membrane. The enzyme catalyses a 1,2-diacyl-sn-glycero-3-phospho-L-serine + H(+) = a 1,2-diacyl-sn-glycero-3-phosphoethanolamine + CO2. Its pathway is phospholipid metabolism; phosphatidylethanolamine biosynthesis; phosphatidylethanolamine from CDP-diacylglycerol: step 2/2. Its function is as follows. Catalyzes the formation of phosphatidylethanolamine (PtdEtn) from phosphatidylserine (PtdSer). In Francisella tularensis subsp. holarctica (strain OSU18), this protein is Phosphatidylserine decarboxylase proenzyme.